The primary structure comprises 403 residues: Serine/threonine transporter SstT (403 aa).

9 consecutive transmembrane segments (helical) span residues 14–34, 44–64, 79–99, 138–158, 175–195, 214–234, 295–315, 327–347, and 353–373; these read VTQI…APAI, VFVS…VMAS, ILWL…FASM, ALLN…GVAL, GVTL…FGLV, LAVL…LIVF, MAGA…TLGI, VVAA…LLLI, and LFGI…IIGV.

It belongs to the dicarboxylate/amino acid:cation symporter (DAACS) (TC 2.A.23) family.

The protein localises to the cell inner membrane. It carries out the reaction L-serine(in) + Na(+)(in) = L-serine(out) + Na(+)(out). It catalyses the reaction L-threonine(in) + Na(+)(in) = L-threonine(out) + Na(+)(out). Functionally, involved in the import of serine and threonine into the cell, with the concomitant import of sodium (symport system). This Pseudomonas putida (strain ATCC 47054 / DSM 6125 / CFBP 8728 / NCIMB 11950 / KT2440) protein is Serine/threonine transporter SstT.